The primary structure comprises 243 residues: Small ribosomal subunit protein uS3 (243 aa).

One can recognise a KH type-2 domain in the interval 39–107 (LRKLISKELQ…KIKLNIKEIH (69 aa)). Residues 212-243 (VAKSPAEPATTAPTPAPERRERQPRRNSNASA) form a disordered region.

The protein belongs to the universal ribosomal protein uS3 family. As to quaternary structure, part of the 30S ribosomal subunit. Forms a tight complex with proteins S10 and S14.

Its function is as follows. Binds the lower part of the 30S subunit head. Binds mRNA in the 70S ribosome, positioning it for translation. The sequence is that of Small ribosomal subunit protein uS3 from Chloroflexus aurantiacus (strain ATCC 29364 / DSM 637 / Y-400-fl).